The primary structure comprises 155 residues: Regulatory protein RecX (155 aa).

It belongs to the RecX family.

The protein resides in the cytoplasm. In terms of biological role, modulates RecA activity. In Pseudomonas entomophila (strain L48), this protein is Regulatory protein RecX.